The chain runs to 236 residues: Small ribosomal subunit protein uS5 (236 aa).

Residues 61 to 124 (ENQEILDIAL…NYAKLNIIEI (64 aa)) form the S5 DRBM domain.

This sequence belongs to the universal ribosomal protein uS5 family. Part of the 30S ribosomal subunit. Contacts protein S4.

With S4 and S12 plays an important role in translational accuracy. The sequence is that of Small ribosomal subunit protein uS5 from Pyrococcus abyssi (strain GE5 / Orsay).